Reading from the N-terminus, the 183-residue chain is Ankyrin repeat domain-containing protein 39 (183 aa).

ANK repeat units lie at residues 30-59 (DFER…DPSQ), 63-92 (AGYT…KCDA), 96-125 (GGAT…NPRL), and 129-158 (DGMT…ALKA). Residue serine 153 is modified to Phosphoserine.

This sequence belongs to the ANKRD39 family.

The protein is Ankyrin repeat domain-containing protein 39 (ANKRD39) of Bos taurus (Bovine).